A 908-amino-acid polypeptide reads, in one-letter code: Protein translocase subunit SecA (908 aa).

ATP contacts are provided by residues Q87, 105–109 (GEGKT), and D512. The disordered stretch occupies residues 865-908 (GGDDGSDEMMAHTPMIRDGDKVGRNDPCPCGSGRKYKQCHGKLS). The span at 879–888 (MIRDGDKVGR) shows a compositional bias: basic and acidic residues. The Zn(2+) site is built by C892, C894, C903, and H904. Residues 898 to 908 (RKYKQCHGKLS) show a composition bias toward basic residues.

Belongs to the SecA family. In terms of assembly, monomer and homodimer. Part of the essential Sec protein translocation apparatus which comprises SecA, SecYEG and auxiliary proteins SecDF-YajC and YidC. It depends on Zn(2+) as a cofactor.

It is found in the cell inner membrane. It localises to the cytoplasm. The enzyme catalyses ATP + H2O + cellular proteinSide 1 = ADP + phosphate + cellular proteinSide 2.. In terms of biological role, part of the Sec protein translocase complex. Interacts with the SecYEG preprotein conducting channel. Has a central role in coupling the hydrolysis of ATP to the transfer of proteins into and across the cell membrane, serving both as a receptor for the preprotein-SecB complex and as an ATP-driven molecular motor driving the stepwise translocation of polypeptide chains across the membrane. This chain is Protein translocase subunit SecA, found in Shewanella sp. (strain MR-4).